The following is a 364-amino-acid chain: tRNA 2-selenouridine synthase (364 aa).

Residues 14–137 (LIADTPIIDV…LRQTTIQATI (124 aa)) form the Rhodanese domain. Cysteine 97 functions as the S-selanylcysteine intermediate in the catalytic mechanism.

This sequence belongs to the SelU family. Monomer.

The enzyme catalyses 5-methylaminomethyl-2-thiouridine(34) in tRNA + selenophosphate + (2E)-geranyl diphosphate + H2O + H(+) = 5-methylaminomethyl-2-selenouridine(34) in tRNA + (2E)-thiogeraniol + phosphate + diphosphate. The catalysed reaction is 5-methylaminomethyl-2-thiouridine(34) in tRNA + (2E)-geranyl diphosphate = 5-methylaminomethyl-S-(2E)-geranyl-thiouridine(34) in tRNA + diphosphate. It catalyses the reaction 5-methylaminomethyl-S-(2E)-geranyl-thiouridine(34) in tRNA + selenophosphate + H(+) = 5-methylaminomethyl-2-(Se-phospho)selenouridine(34) in tRNA + (2E)-thiogeraniol. It carries out the reaction 5-methylaminomethyl-2-(Se-phospho)selenouridine(34) in tRNA + H2O = 5-methylaminomethyl-2-selenouridine(34) in tRNA + phosphate. In terms of biological role, involved in the post-transcriptional modification of the uridine at the wobble position (U34) of tRNA(Lys), tRNA(Glu) and tRNA(Gln). Catalyzes the conversion of 2-thiouridine (S2U-RNA) to 2-selenouridine (Se2U-RNA). Acts in a two-step process involving geranylation of 2-thiouridine (S2U) to S-geranyl-2-thiouridine (geS2U) and subsequent selenation of the latter derivative to 2-selenouridine (Se2U) in the tRNA chain. This Escherichia coli (strain 55989 / EAEC) protein is tRNA 2-selenouridine synthase.